The sequence spans 360 residues: Phospho-N-acetylmuramoyl-pentapeptide-transferase (360 aa).

The next 10 helical transmembrane spans lie at 19 to 39, 73 to 93, 95 to 115, 136 to 156, 173 to 193, 199 to 219, 233 to 253, 263 to 283, 288 to 308, and 338 to 358; these read LTYL…LSIF, TMGG…WADL, SVYT…GWTD, YLSL…DTPI, GILF…AVNL, GLAI…AYLS, IAGA…GLGF, VFMG…VAVV, LAFA…MIQV, and VTIR…STLK.

It belongs to the glycosyltransferase 4 family. MraY subfamily. It depends on Mg(2+) as a cofactor.

Its subcellular location is the cell inner membrane. The enzyme catalyses UDP-N-acetyl-alpha-D-muramoyl-L-alanyl-gamma-D-glutamyl-meso-2,6-diaminopimeloyl-D-alanyl-D-alanine + di-trans,octa-cis-undecaprenyl phosphate = di-trans,octa-cis-undecaprenyl diphospho-N-acetyl-alpha-D-muramoyl-L-alanyl-D-glutamyl-meso-2,6-diaminopimeloyl-D-alanyl-D-alanine + UMP. It participates in cell wall biogenesis; peptidoglycan biosynthesis. Its function is as follows. Catalyzes the initial step of the lipid cycle reactions in the biosynthesis of the cell wall peptidoglycan: transfers peptidoglycan precursor phospho-MurNAc-pentapeptide from UDP-MurNAc-pentapeptide onto the lipid carrier undecaprenyl phosphate, yielding undecaprenyl-pyrophosphoryl-MurNAc-pentapeptide, known as lipid I. In Dichelobacter nodosus (strain VCS1703A), this protein is Phospho-N-acetylmuramoyl-pentapeptide-transferase.